A 232-amino-acid chain; its full sequence is TIR domain-containing adapter molecule 2 (232 aa).

Positions 1–10 (MGIGKSKMDP) are enriched in basic and acidic residues. A disordered region spans residues 1 to 71 (MGIGKSKMDP…VEERPEEDTE (71 aa)). The N-myristoyl glycine moiety is linked to residue Gly2. The segment covering 19–29 (KSQSVDTSQSH) has biased composition (polar residues). Over residues 30–42 (HMSDSKQSEEISL) the composition is skewed to basic and acidic residues. The span at 55 to 71 (PAEEQEGVEERPEEDTE) shows a compositional bias: acidic residues. The TIR domain occupies 70 to 226 (TEEEVFLKFV…AIWKETRNTV (157 aa)). Tyr164 is subject to Phosphotyrosine.

As to quaternary structure, homodimer. Interacts with TLR4, TICAM1, IRF3 and IRF7 in response to LPS. Interacts with IL1R1, IL1RAP, IRAK2, IRAK3 and TRAF6. Interacts with protein kinase-inactive mutants of IRAK1 and IRAK4. Isoform 1 interacts with isoform 2; the interaction occurs in late endosomes and disrupts the interaction between isoform 1 and TICAM1. Interacts with MYD88; the interaction decreases after IL-18 stimulation in a time-dependent manner. Interacts with IL18R1 and IL18RAP. Interacts with TLR2. Interacts with RAB11FIP2. Myristoylated. Required for membrane association which is critical for its ability to initiate efficient signaling. In terms of processing, phosphorylated by PRKCE in response to LPS. Phosphorylation is essential for its function. It is depleted from the membrane upon phosphorylation. Tyrosine phosphorylation is inhibited by phosphatase PTPN4.

It localises to the cytoplasm. It is found in the golgi apparatus. Its subcellular location is the cell membrane. The protein localises to the endoplasmic reticulum. The protein resides in the early endosome. It localises to the late endosome. It is found in the cell projection. Its subcellular location is the phagocytic cup. Its function is as follows. Functions as a sorting adapter in different signaling pathways to facilitate downstream signaling leading to type I interferon induction. In TLR4 signaling, physically bridges TLR4 and TICAM1 and functionally transmits signal to TICAM1 in early endosomes after endocytosis of TLR4. In TLR2 signaling, physically bridges TLR2 and MYD88 and is required for the TLR2-dependent movement of MYD88 to endosomes following ligand engagement. Involved in IL-18 signaling and is proposed to function as a sorting adapter for MYD88 in IL-18 signaling during adaptive immune response. Forms a complex with RAB11FIP2 that is recruited to the phagosomes to promote the activation of the actin-regulatory GTPases RAC1 and CDC42 and subsequent phagocytosis of Gram-negative bacteria. In Bos taurus (Bovine), this protein is TIR domain-containing adapter molecule 2 (TICAM2).